The primary structure comprises 454 residues: UPF0210 protein BLA_0552 (454 aa).

Belongs to the UPF0210 family. Homodimer.

This is UPF0210 protein BLA_0552 from Bifidobacterium animalis subsp. lactis (strain AD011).